We begin with the raw amino-acid sequence, 145 residues long: Probable inactive ribonuclease-like protein 12 (145 aa).

Residues 1–19 (MVLMVVVFLLLLFWENELT) form the signal peptide.

This sequence belongs to the pancreatic ribonuclease family.

The protein resides in the secreted. Its function is as follows. Does not exhibit any ribonuclease activity. The chain is Probable inactive ribonuclease-like protein 12 (Rnase12) from Mus musculus (Mouse).